A 388-amino-acid chain; its full sequence is Gastricsin (388 aa).

Positions 1–16 (MKWMVVVLVCLQLLEA) are cleaved as a signal peptide. The propeptide at 17-59 (AVVKVPLKKFKSIRETMKEKGLLGEFLRTHKYDPAWKYRFGDL) is activation peptide. In terms of domain architecture, Peptidase A1 spans 73-385 (YFGEISIGTP…DLGNNRVGFA (313 aa)). Residue D91 is part of the active site. Intrachain disulfides connect C104-C109 and C267-C271. D276 is a catalytic residue. C310 and C343 form a disulfide bridge.

The protein belongs to the peptidase A1 family.

The protein localises to the secreted. The enzyme catalyses More restricted specificity than pepsin A, but shows preferential cleavage at Tyr-|-Xaa bonds. High activity on hemoglobin.. Hydrolyzes a variety of proteins. The sequence is that of Gastricsin (PGC) from Homo sapiens (Human).